The chain runs to 162 residues: Caveolin-2 (162 aa).

At 1 to 86 (MGLETEKTDV…FEISKYVMYK (86 aa)) the chain is on the cytoplasmic side. A Phosphotyrosine; by SRC modification is found at Y19. Phosphoserine occurs at positions 20 and 23. At Y27 the chain carries Phosphotyrosine; by SRC. Position 36 is a phosphoserine (S36). An intramembrane region (helical) is located at residues 87-107 (FLTVFLAIPLAFLAGILFATL). Residues 108-162 (SCLHIWIIMPFVKTCLMVLPSVQTIWKSVTDAIVAPLCTSIGRSFSSVSLQLSQD) are Cytoplasmic-facing.

The protein belongs to the caveolin family. In terms of assembly, monomer or homodimer. Interacts with CAV1; the interaction forms a stable heterooligomeric complex that is required for targeting to lipid rafts and for caveolae formation. Tyrosine phosphorylated forms do not form heterooligomers with the Tyr-19-phosphorylated form existing as a monomer or dimer, and the Tyr-27-form as a monomer only. Interacts (tyrosine phosphorylated form) with the SH2 domain-containing proteins, RASA1, NCK1 and SRC. Interacts (tyrosine phosphorylated form) with INSR, the interaction (Tyr-27-phosphorylated form) is increased on insulin stimulation. Interacts (Tyr-19 phosphorylated form) with MAPK1 (phosphorylated form); the interaction, promoted by insulin, leads to nuclear location and MAPK1 activation. Interacts with STAT3; the interaction is increased on insulin-induced tyrosine phosphorylation leading to STAT activation. Post-translationally, phosphorylated on serine and tyrosine residues. CAV1 promotes phosphorylation on Ser-23 which then targets the complex to the plasma membrane, lipid rafts and caveolae. Phosphorylation on Ser-36 appears to modulate mitosis in endothelial cells. Phosphorylation on both Tyr-19 and Tyr-27 is required for insulin-induced 'Ser-727' phosphorylation of STAT3 and its activation. Phosphorylation on Tyr-19 is required for insulin-induced phosphorylation of MAPK1 and DNA binding of STAT3. Tyrosine phosphorylation is induced by both EGF and insulin (By. similarity).

It localises to the nucleus. The protein resides in the cytoplasm. The protein localises to the golgi apparatus membrane. It is found in the cell membrane. Its subcellular location is the membrane. It localises to the caveola. Functionally, may act as a scaffolding protein within caveolar membranes. Interacts directly with G-protein alpha subunits and can functionally regulate their activity. Acts as an accessory protein in conjunction with CAV1 in targeting to lipid rafts and driving caveolae formation. The Ser-36 phosphorylated form has a role in modulating mitosis in endothelial cells. Positive regulator of cellular mitogenesis of the MAPK signaling pathway. Required for the insulin-stimulated nuclear translocation and activation of MAPK1 and STAT3, and the subsequent regulation of cell cycle progression. The polypeptide is Caveolin-2 (CAV2) (Aotus nancymaae (Ma's night monkey)).